Here is a 545-residue protein sequence, read N- to C-terminus: Adenine deaminase (545 aa).

It belongs to the metallo-dependent hydrolases superfamily. Adenine deaminase family. The cofactor is Mn(2+).

The enzyme catalyses adenine + H2O + H(+) = hypoxanthine + NH4(+). The polypeptide is Adenine deaminase (Parabacteroides distasonis (strain ATCC 8503 / DSM 20701 / CIP 104284 / JCM 5825 / NCTC 11152)).